A 168-amino-acid chain; its full sequence is Protein-export protein SecB (168 aa).

Positions Met-1 to Glu-10 are enriched in polar residues. The interval Met-1–Pro-22 is disordered.

Belongs to the SecB family. As to quaternary structure, homotetramer, a dimer of dimers. One homotetramer interacts with 1 SecA dimer.

Its subcellular location is the cytoplasm. Its function is as follows. One of the proteins required for the normal export of preproteins out of the cell cytoplasm. It is a molecular chaperone that binds to a subset of precursor proteins, maintaining them in a translocation-competent state. It also specifically binds to its receptor SecA. In Parvibaculum lavamentivorans (strain DS-1 / DSM 13023 / NCIMB 13966), this protein is Protein-export protein SecB.